Consider the following 305-residue polypeptide: Methionyl-tRNA formyltransferase (305 aa).

111–114 (SLLP) contributes to the (6S)-5,6,7,8-tetrahydrofolate binding site.

This sequence belongs to the Fmt family.

It carries out the reaction L-methionyl-tRNA(fMet) + (6R)-10-formyltetrahydrofolate = N-formyl-L-methionyl-tRNA(fMet) + (6S)-5,6,7,8-tetrahydrofolate + H(+). In terms of biological role, attaches a formyl group to the free amino group of methionyl-tRNA(fMet). The formyl group appears to play a dual role in the initiator identity of N-formylmethionyl-tRNA by promoting its recognition by IF2 and preventing the misappropriation of this tRNA by the elongation apparatus. This Campylobacter jejuni subsp. jejuni serotype O:6 (strain 81116 / NCTC 11828) protein is Methionyl-tRNA formyltransferase.